The sequence spans 352 residues: Selenide, water dikinase (352 aa).

C21 is a catalytic residue. ATP contacts are provided by residues K24 and T51–D53. D54 is a binding site for Mg(2+). ATP-binding positions include D71, D94, and G141 to S143. D94 contacts Mg(2+). D231 serves as a coordination point for Mg(2+).

This sequence belongs to the selenophosphate synthase 1 family. Class I subfamily. Homodimer. The cofactor is Mg(2+).

It catalyses the reaction hydrogenselenide + ATP + H2O = selenophosphate + AMP + phosphate + 2 H(+). Its function is as follows. Synthesizes selenophosphate from selenide and ATP. The sequence is that of Selenide, water dikinase from Myxococcus xanthus (strain DK1622).